The chain runs to 467 residues: F-box protein pof9 (467 aa).

The 47-residue stretch at lysine 3–phenylalanine 49 folds into the F-box domain. RCC1 repeat units lie at residues arginine 77 to glutamate 131, glutamate 302 to serine 354, and aspartate 355 to glycine 417.

In terms of assembly, interacts with skp1.

The protein localises to the cytoplasm. It is found in the nucleus. This is F-box protein pof9 (pof9) from Schizosaccharomyces pombe (strain 972 / ATCC 24843) (Fission yeast).